We begin with the raw amino-acid sequence, 615 residues long: Leucine aminopeptidase 2 (615 aa).

A peptide-binding positions include 139–141 (QCQ) and 271–276 (PYGGME). His300 provides a ligand contact to Zn(2+). The active-site Proton acceptor is the Glu301. His304 and Glu323 together coordinate Zn(2+). The Proton donor role is filled by Tyr386.

This sequence belongs to the peptidase M1 family. Zn(2+) is required as a cofactor.

It is found in the cytoplasm. It localises to the nucleus. It catalyses the reaction an epoxide + H2O = an ethanediol. Functionally, aminopeptidase that preferentially cleaves di- and tripeptides. Also has low epoxide hydrolase activity (in vitro). Can hydrolyze the epoxide leukotriene LTA(4) but it forms preferentially 5,6-dihydroxy-7,9,11,14-eicosatetraenoic acid rather than the cytokine leukotriene B(4) as the product compared to the homologous mammalian enzyme (in vitro). This is Leucine aminopeptidase 2 from Aspergillus oryzae (strain ATCC 42149 / RIB 40) (Yellow koji mold).